Consider the following 501-residue polypeptide: uncharacterized protein (501 aa).

Disordered regions lie at residues 179–404 (EKTS…DETA) and 480–501 (SDDT…DDSD). Basic and acidic residues predominate over residues 191–200 (SRNESQDKSR). Over residues 201–214 (DKSRKKVCNTHKNK) the composition is skewed to basic residues. Residues 215–226 (KTLDNVKPDKNI) are compositionally biased toward basic and acidic residues. Positions 231–274 (SSNKFTTNKPKSNKNSSDSDGSTKTTKSTRSTKSTKSSKSQKST) are enriched in low complexity. A compositionally biased stretch (basic and acidic residues) spans 304–316 (NPKESINHKKNDS). The segment covering 333 to 352 (DSTNCRKSNRTTTRDVTNSD) has biased composition (polar residues). The segment covering 379-403 (EQSDLTEDETEENVSEEDETEEDET) has biased composition (acidic residues).

This is an uncharacterized protein from Acanthamoeba polyphaga mimivirus (APMV).